The primary structure comprises 358 residues: Sulfate/thiosulfate import ATP-binding protein CysA (358 aa).

The ABC transporter domain maps to 3-237 (IKIENLEKHF…PQTPFVTQFV (235 aa)). Position 35 to 42 (35 to 42 (GPSGCGKT)) interacts with ATP.

It belongs to the ABC transporter superfamily. Sulfate/tungstate importer (TC 3.A.1.6) family. As to quaternary structure, the complex is composed of two ATP-binding proteins (CysA), two transmembrane proteins (CysT and CysW) and a solute-binding protein (CysP).

It is found in the cell inner membrane. The enzyme catalyses sulfate(out) + ATP + H2O = sulfate(in) + ADP + phosphate + H(+). It carries out the reaction thiosulfate(out) + ATP + H2O = thiosulfate(in) + ADP + phosphate + H(+). In terms of biological role, part of the ABC transporter complex CysAWTP involved in sulfate/thiosulfate import. Responsible for energy coupling to the transport system. The chain is Sulfate/thiosulfate import ATP-binding protein CysA from Mannheimia succiniciproducens (strain KCTC 0769BP / MBEL55E).